We begin with the raw amino-acid sequence, 1306 residues long: Synergin gamma (1306 aa).

Positions 113-153 (MQKQFAEEQQKRFEQQQKLLEEERKRRQFEEQKQKLRLLSS) form a coiled coil. Disordered stretches follow at residues 176–196 (GFSRDAKMHPTPASHPKKQGP) and 252–285 (SGPASAEAEKTSDQTLSKEESGVGVFPSQDPAQS). Over residues 258–272 (EAEKTSDQTLSKEES) the composition is skewed to basic and acidic residues. The 112-residue stretch at 293–404 (NESLVPDAYK…TPVSQPTAMP (112 aa)) folds into the EH domain. The short motif at 455–459 (DFQDF) is the DFXDF motif 1 element. Residues 460-494 (QDASKSGSIDDSFTDFQEMPASSKTSNSQHGNSAP) are disordered. Position 471 is a phosphoserine (serine 471). Lysine 509 carries the N6-acetyllysine modification. Residues 514-778 (KGISTDKPSE…ADFHSSKFSS (265 aa)) are interaction with AP1G1. Residues 559–601 (STGTDDGFTDFKTADSVSPLEPPTKDTFPSAFASGAAQQTQTQ) are disordered. Serine 576 is modified (phosphoserine). The segment at 661–673 (LADDFGEFNLFGE) is interaction with AP1G1, AP1G2 and GGA1. Positions 685–689 (DFADF) match the DFXDF motif 2 motif. The interval 697 to 730 (ISSEPKASDKYEALREEVSPSPLSSSTVEGAQHP) is disordered. Over residues 702 to 714 (KASDKYEALREEV) the composition is skewed to basic and acidic residues. Serine 715 bears the Phosphoserine mark. Lysine 736 bears the N6-acetyllysine mark. 2 positions are modified to phosphoserine: serine 744 and serine 764. Positions 767–771 (DFADF) match the DFXDF motif 3 motif. Residues serine 804, serine 844, serine 847, serine 901, serine 911, serine 927, serine 974, serine 998, serine 1065, serine 1067, serine 1079, and serine 1090 each carry the phosphoserine modification. Disordered regions lie at residues 986–1016 (PTVDRSQETSCPSPASSVASHETPKEGADDF) and 1065–1090 (SLSLGDKEISRSSPSPALEQPFRDRS). Positions 993–1005 (ETSCPSPASSVAS) are enriched in polar residues. Threonine 1092 is subject to Phosphothreonine.

In terms of assembly, self-associates. Interacts with GGA1 (via GAE domain). Interacts with GGA2 and GGA3. Interacts with AP1G1 (via GAE domain), a subunit of adapter protein complex AP-1. Interacts with AP1G2 (via GAE domain) a subunit of adapter protein complex AP-1. Component of the aftiphilin/p200/gamma-synergin complex, at least composed of AFTPH/aftiphilin, HEATR5B/p200a and SYNRG/gamma-synergin, which plays a role in the AP1G1/AP-1-mediated trafficking of transferrin from early to recycling endosomes. Within the complex interacts with AFTPH/aftiphilin and HEATR5B/p200a; the interactions are direct. Interacts (via EH domain) with SCAMP1.

The protein resides in the cytoplasm. The protein localises to the cytosol. Its subcellular location is the golgi apparatus. It is found in the trans-Golgi network membrane. It localises to the perinuclear region. The protein resides in the cytoplasmic vesicle. The protein localises to the clathrin-coated vesicle. Plays a role in endocytosis and/or membrane trafficking at the trans-Golgi network (TGN). May act by linking the adapter protein complex AP-1 to other proteins. Component of clathrin-coated vesicles. Component of the aftiphilin/p200/gamma-synergin complex, which plays roles in AP1G1/AP-1-mediated protein trafficking including the trafficking of transferrin from early to recycling endosomes, and the membrane trafficking of furin and the lysosomal enzyme cathepsin D between the trans-Golgi network (TGN) and endosomes. In Mus musculus (Mouse), this protein is Synergin gamma (Synrg).